A 450-amino-acid chain; its full sequence is Tubulin alpha-2 chain (450 aa).

The GTP site is built by glutamine 11, glutamate 71, glycine 144, threonine 145, threonine 179, asparagine 206, and asparagine 228. Position 71 (glutamate 71) interacts with Mg(2+). Residue glutamate 254 is part of the active site. At threonine 349 the chain carries Phosphothreonine. Residues 430 to 450 (KDYEEVGAEGGDDEDDEGEEY) are disordered. A compositionally biased stretch (acidic residues) spans 431–450 (DYEEVGAEGGDDEDDEGEEY).

The protein belongs to the tubulin family. Dimer of alpha and beta chains. A typical microtubule is a hollow water-filled tube with an outer diameter of 25 nm and an inner diameter of 15 nM. Alpha-beta heterodimers associate head-to-tail to form protofilaments running lengthwise along the microtubule wall with the beta-tubulin subunit facing the microtubule plus end conferring a structural polarity. Microtubules usually have 13 protofilaments but different protofilament numbers can be found in some organisms and specialized cells. Mg(2+) serves as cofactor. Undergoes a tyrosination/detyrosination cycle, the cyclic removal and re-addition of a C-terminal tyrosine residue by the enzymes tubulin tyrosine carboxypeptidase (TTCP) and tubulin tyrosine ligase (TTL), respectively. Post-translationally, acetylation of alpha chains at Lys-40 stabilizes microtubules and affects affinity and processivity of microtubule motors. This modification has a role in multiple cellular functions, ranging from cell motility, cell cycle progression or cell differentiation to intracellular trafficking and signaling.

It localises to the cytoplasm. The protein localises to the cytoskeleton. It catalyses the reaction GTP + H2O = GDP + phosphate + H(+). In terms of biological role, tubulin is the major constituent of microtubules, a cylinder consisting of laterally associated linear protofilaments composed of alpha- and beta-tubulin heterodimers. Microtubules grow by the addition of GTP-tubulin dimers to the microtubule end, where a stabilizing cap forms. Below the cap, tubulin dimers are in GDP-bound state, owing to GTPase activity of alpha-tubulin. The sequence is that of Tubulin alpha-2 chain (TUBA2) from Arabidopsis thaliana (Mouse-ear cress).